The following is a 208-amino-acid chain: Mediator of RNA polymerase II transcription subunit 18 (208 aa).

Ser-66 carries the phosphoserine modification.

It belongs to the Mediator complex subunit 18 family. As to quaternary structure, component of the Mediator complex, which is composed of MED1, MED4, MED6, MED7, MED8, MED9, MED10, MED11, MED12, MED13, MED13L, MED14, MED15, MED16, MED17, MED18, MED19, MED20, MED21, MED22, MED23, MED24, MED25, MED26, MED27, MED29, MED30, MED31, CCNC, CDK8 and CDC2L6/CDK11. The MED12, MED13, CCNC and CDK8 subunits form a distinct module termed the CDK8 module. Mediator containing the CDK8 module is less active than Mediator lacking this module in supporting transcriptional activation. Individual preparations of the Mediator complex lacking one or more distinct subunits have been variously termed ARC, CRSP, DRIP, PC2, SMCC and TRAP.

The protein localises to the nucleus. Its function is as follows. Component of the Mediator complex, a coactivator involved in the regulated transcription of nearly all RNA polymerase II-dependent genes. Mediator functions as a bridge to convey information from gene-specific regulatory proteins to the basal RNA polymerase II transcription machinery. Mediator is recruited to promoters by direct interactions with regulatory proteins and serves as a scaffold for the assembly of a functional preinitiation complex with RNA polymerase II and the general transcription factors. This Mus musculus (Mouse) protein is Mediator of RNA polymerase II transcription subunit 18 (Med18).